The primary structure comprises 286 residues: 3-hydroxyanthranilate 3,4-dioxygenase (286 aa).

Residues 1–160 form a domain A (catalytic) region; sequence MERRLGVRAW…SEQYRTGKPI (160 aa). Residue R43 participates in O2 binding. Residues H47, E53, and H91 each coordinate Fe cation. E53 is a binding site for substrate. Substrate contacts are provided by R95 and E105. A linker region spans residues 161-177; that stretch reads PDQLLKEPPFPLSTRSI. The tract at residues 178–286 is domain B; it reads MEPMSLDAWL…QDPACKKPLG (109 aa).

The protein belongs to the 3-HAO family. Monomer. Fe(2+) serves as cofactor.

The protein resides in the cytoplasm. The protein localises to the cytosol. It catalyses the reaction 3-hydroxyanthranilate + O2 = (2Z,4Z)-2-amino-3-carboxymuconate 6-semialdehyde. Its pathway is cofactor biosynthesis; NAD(+) biosynthesis; quinolinate from L-kynurenine: step 3/3. In terms of biological role, catalyzes the oxidative ring opening of 3-hydroxyanthranilate to 2-amino-3-carboxymuconate semialdehyde, which spontaneously cyclizes to quinolinate. This Homo sapiens (Human) protein is 3-hydroxyanthranilate 3,4-dioxygenase.